Here is a 382-residue protein sequence, read N- to C-terminus: Elongation factor Tu (382 aa).

Residues 1-7, 62-66, and 117-120 each bind GTP; these read HVDHGKT, DCPGH, and NKVD. Residues 1–190 enclose the tr-type G domain; it reads HVDHGKTTLT…AVDEYIPTPQ (190 aa). Position 7 (Thr-7) interacts with Mg(2+).

Belongs to the TRAFAC class translation factor GTPase superfamily. Classic translation factor GTPase family. EF-Tu/EF-1A subfamily. In terms of assembly, monomer.

The protein localises to the cytoplasm. It catalyses the reaction GTP + H2O = GDP + phosphate + H(+). GTP hydrolase that promotes the GTP-dependent binding of aminoacyl-tRNA to the A-site of ribosomes during protein biosynthesis. The polypeptide is Elongation factor Tu (Chloroflexus aurantiacus).